Reading from the N-terminus, the 180-residue chain is Homeobox protein ceh-12 (180 aa).

The disordered stretch occupies residues 15-37 (SSQNEDQKLESHPSPPSQIPNYS). A DNA-binding region (homeobox) is located at residues 110-169 (MRRPRTAFSSEQLVQLEKQFSDNRYLSRPRRYQLAQQLSLSETQIKIWFQNRRMKNKRCP).

In terms of tissue distribution, expressed in VB motor neurons in the ventral nerve cord.

Its subcellular location is the nucleus. In terms of biological role, transcription factor. Plays a role, downstream from homeobox protein unc-4 and Wnt signaling, in specifying synaptic inputs to A-class motor neurons. Involved in patterning of the synaptic outputs of the postmitotic DA class cholinergic motor neurons. The chain is Homeobox protein ceh-12 (ceh-12) from Caenorhabditis elegans.